A 334-amino-acid chain; its full sequence is MASTKTGLVLIHPGATEDPSSVVNAQEQARSEGVSVEAQFLINKINDGSVKLEDNHYDEVRYVTPEASDEIRFPSKLIGVIGKSLKTNGKLYGLSDLYKLDALINEFEISRSENHYCWIKKASIKAEPVAVPLRNHKKTTTPGTTTTAKKSLPIFKRATDNDSTKNKQQKQQHTGPARVSLDSEDEDEESEGSSDPSDSKSKFFEKSGSPLTENDSIEEDELVDENEMREPSLTMITCGKSKTRRRKACKDCTCGQKEIEEEELDGVRKQQDKVVKFSDQELTEIDFTVQGKKVGGCGSCTLGDAFRCSGCPYLGLPAFKPGQQIDLSSMGDDL.

The interval 1–131 is N-terminal SAM-like domain; it reads MASTKTGLVL…ASIKAEPVAV (131 aa). A linker region spans residues 132-228; the sequence is PLRNHKKTTT…EDELVDENEM (97 aa). Positions 135 to 229 are disordered; that stretch reads NHKKTTTPGT…DELVDENEMR (95 aa). Residues 140 to 150 show a composition bias toward low complexity; the sequence is TTPGTTTTAKK. Acidic residues-rich tracts occupy residues 182 to 192 and 215 to 227; these read DSEDEDEESEG and DSIEEDELVDENE. [2Fe-2S] cluster-binding residues include Cys238, Cys249, Cys252, and Cys254. A fe-S binding site A region spans residues 238–254; that stretch reads CGKSKTRRRKACKDCTC. Residues Cys297, Cys300, Cys308, and Cys311 each contribute to the [4Fe-4S] cluster site. 2 consecutive short sequence motifs (cx2C motif) follow at residues 297-300 and 308-311; these read CGSC and CSGC. A fe-S binding site B region spans residues 297–311; the sequence is CGSCTLGDAFRCSGC.

Belongs to the anamorsin family. In terms of assembly, monomer. Interacts with TAH18. Interacts with MIA40. The cofactor is [2Fe-2S] cluster. It depends on [4Fe-4S] cluster as a cofactor.

The protein resides in the cytoplasm. The protein localises to the mitochondrion intermembrane space. Functionally, component of the cytosolic iron-sulfur (Fe-S) protein assembly (CIA) machinery required for the maturation of extramitochondrial Fe-S proteins. Part of an electron transfer chain functioning in an early step of cytosolic Fe-S biogenesis, facilitating the de novo assembly of a [4Fe-4S] cluster on the scaffold complex CFD1-NBP35. Electrons are transferred to DRE2 from NADPH via the FAD- and FMN-containing protein TAH18. TAH18-DRE2 are also required for the assembly of the diferric tyrosyl radical cofactor of ribonucleotide reductase (RNR), probably by providing electrons for reduction during radical cofactor maturation in the catalytic small subunit RNR2. The protein is Fe-S cluster assembly protein DRE2 of Zygosaccharomyces rouxii (strain ATCC 2623 / CBS 732 / NBRC 1130 / NCYC 568 / NRRL Y-229).